Reading from the N-terminus, the 168-residue chain is Protein DESIGUAL 2 (168 aa).

A signal peptide spans 1 to 20 (MARNVGFFICILILAMDVSA). The next 3 helical transmembrane spans lie at 56-76 (LAAC…GGCL), 94-114 (AVAS…MLIV), and 133-153 (VLSI…AYYI).

It belongs to the DESIGUAL family. Mainly expressed in roots, inflorescences and developing leaves, and, at low levels, in mature leaves.

Its subcellular location is the endoplasmic reticulum membrane. Functionally, involved, partially redundantly with VCC/DEAL1 and DEAL3, to ensure bilateral symmetry development and early leaf margin patterning, probably via the regulation of auxin and CUC2 distribution. This is Protein DESIGUAL 2 from Arabidopsis thaliana (Mouse-ear cress).